Here is a 488-residue protein sequence, read N- to C-terminus: Glutamyl-tRNA(Gln) amidotransferase subunit A (488 aa).

Residues lysine 77 and serine 152 each act as charge relay system in the active site. Residue serine 176 is the Acyl-ester intermediate of the active site.

This sequence belongs to the amidase family. GatA subfamily. As to quaternary structure, heterotrimer of A, B and C subunits.

It catalyses the reaction L-glutamyl-tRNA(Gln) + L-glutamine + ATP + H2O = L-glutaminyl-tRNA(Gln) + L-glutamate + ADP + phosphate + H(+). Its function is as follows. Allows the formation of correctly charged Gln-tRNA(Gln) through the transamidation of misacylated Glu-tRNA(Gln) in organisms which lack glutaminyl-tRNA synthetase. The reaction takes place in the presence of glutamine and ATP through an activated gamma-phospho-Glu-tRNA(Gln). This is Glutamyl-tRNA(Gln) amidotransferase subunit A from Streptococcus thermophilus (strain CNRZ 1066).